The sequence spans 228 residues: Enolase-phosphatase E1 (228 aa).

The protein belongs to the HAD-like hydrolase superfamily. MasA/MtnC family. Monomer. It depends on Mg(2+) as a cofactor.

It carries out the reaction 5-methylsulfanyl-2,3-dioxopentyl phosphate + H2O = 1,2-dihydroxy-5-(methylsulfanyl)pent-1-en-3-one + phosphate. It participates in amino-acid biosynthesis; L-methionine biosynthesis via salvage pathway; L-methionine from S-methyl-5-thio-alpha-D-ribose 1-phosphate: step 3/6. Its pathway is amino-acid biosynthesis; L-methionine biosynthesis via salvage pathway; L-methionine from S-methyl-5-thio-alpha-D-ribose 1-phosphate: step 4/6. Its function is as follows. Bifunctional enzyme that catalyzes the enolization of 2,3-diketo-5-methylthiopentyl-1-phosphate (DK-MTP-1-P) into the intermediate 2-hydroxy-3-keto-5-methylthiopentenyl-1-phosphate (HK-MTPenyl-1-P), which is then dephosphorylated to form the acireductone 1,2-dihydroxy-3-keto-5-methylthiopentene (DHK-MTPene). In Picosynechococcus sp. (strain ATCC 27264 / PCC 7002 / PR-6) (Agmenellum quadruplicatum), this protein is Enolase-phosphatase E1.